Consider the following 574-residue polypeptide: Calcium-dependent protein kinase 9 (574 aa).

The tract at residues 1-64 is disordered; the sequence is MGNTCCVAPA…RARAKPNPYD (64 aa). Residue Gly2 is the site of N-myristoyl glycine attachment. The segment covering 28 to 40 has biased composition (low complexity); sequence KSPAPSATTTTAT. Residues 101 to 359 form the Protein kinase domain; it reads YQLGRELGRG…AQQVLDHPWL (259 aa). ATP contacts are provided by residues 107–115 and Lys130; that span reads LGRGEFGVT. The active-site Proton acceptor is Asp225. Residues 365–395 form an autoinhibitory domain region; it reads APNVPLGDVVRARLKQFSLMNRLKKKAMRVI. EF-hand domains follow at residues 402-437, 438-473, 474-509, and 510-545; these read EEVEVIKDMFALMDTDNNGRVTLQELKDGLTKVGSK, LAEPEMELLMEAADVDGNGYLDYGEFVAVTIHLQRL, SNDNHLRTAFLFFDKDGSGYIDRAELADALADDSGH, and ADDAVLDHILREVDTDKDGRISYEEFVAMMKSGTDW. Residues Asp415, Asp417, Asn419, Arg421, Glu426, Asp451, Asp453, Asn455, Tyr457, Glu462, Asp487, Asp489, Ser491, Tyr493, Glu498, Asp523, Asp525, Asp527, Arg529, and Glu534 each coordinate Ca(2+).

Belongs to the protein kinase superfamily. Ser/Thr protein kinase family. CDPK subfamily. In terms of tissue distribution, expressed in leaf blades and stems. Expressed at low levels in anthers and spikelets.

The protein resides in the membrane. The catalysed reaction is L-seryl-[protein] + ATP = O-phospho-L-seryl-[protein] + ADP + H(+). The enzyme catalyses L-threonyl-[protein] + ATP = O-phospho-L-threonyl-[protein] + ADP + H(+). Activated by calcium. Autophosphorylation may play an important role in the regulation of the kinase activity. Its function is as follows. May play a role in signal transduction pathways that involve calcium as a second messenger. Functions in signal transduction pathways that positively regulate responses to drought, osmotic, and dehydration stress. Regulates expression of stress-associated genes in response to drought. Involved in tolerance to drought stress by increasing proline and soluble sugars, and improving stomatal closure. Required for pollen maturation and spikelet fertility. The protein is Calcium-dependent protein kinase 9 of Oryza sativa subsp. japonica (Rice).